A 108-amino-acid polypeptide reads, in one-letter code: Nucleoid-associated protein BTH_I2220 (108 aa).

Belongs to the YbaB/EbfC family. In terms of assembly, homodimer.

The protein localises to the cytoplasm. It is found in the nucleoid. Functionally, binds to DNA and alters its conformation. May be involved in regulation of gene expression, nucleoid organization and DNA protection. The polypeptide is Nucleoid-associated protein BTH_I2220 (Burkholderia thailandensis (strain ATCC 700388 / DSM 13276 / CCUG 48851 / CIP 106301 / E264)).